Here is a 208-residue protein sequence, read N- to C-terminus: GTP cyclohydrolase 1 (208 aa).

Zn(2+) is bound by residues Cys-89, His-92, and Cys-163.

It belongs to the GTP cyclohydrolase I family. As to quaternary structure, homomer.

It carries out the reaction GTP + H2O = 7,8-dihydroneopterin 3'-triphosphate + formate + H(+). It functions in the pathway cofactor biosynthesis; 7,8-dihydroneopterin triphosphate biosynthesis; 7,8-dihydroneopterin triphosphate from GTP: step 1/1. This is GTP cyclohydrolase 1 from Saccharolobus islandicus (strain L.S.2.15 / Lassen #1) (Sulfolobus islandicus).